Reading from the N-terminus, the 69-residue chain is Dermaseptin-H3 (69 aa).

The first 22 residues, 1–22 (MAFLKKSLFLVLFLGMVSLSIC), serve as a signal peptide directing secretion. A propeptide spanning residues 23-43 (EEEKRENEDEEKQEDDEQSEM) is cleaved from the precursor. Residues 24 to 44 (EEKRENEDEEKQEDDEQSEMK) are disordered. Residues 30-40 (EDEEKQEDDEQ) show a composition bias toward acidic residues. L66 carries the leucine amide modification. Residues 68-69 (EQ) constitute a propeptide that is removed on maturation.

Belongs to the frog skin active peptide (FSAP) family. Dermaseptin subfamily. Expressed by the skin glands.

It localises to the secreted. Possesses a potent antimicrobial activity against Gram-positive and Gram-negative bacteria. Probably acts by disturbing membrane functions with its amphipathic structure. The protein is Dermaseptin-H3 of Pithecopus azureus (Orange-legged monkey tree frog).